The primary structure comprises 122 residues: Fluoride-specific ion channel FluC 2 (122 aa).

4 helical membrane-spanning segments follow: residues M1–S21, P33–L53, V62–Y82, and G102–F122. Na(+) is bound by residues G72 and T75.

Belongs to the fluoride channel Fluc/FEX (TC 1.A.43) family.

The protein localises to the cell membrane. The enzyme catalyses fluoride(in) = fluoride(out). Its activity is regulated as follows. Na(+) is not transported, but it plays an essential structural role and its presence is essential for fluoride channel function. Fluoride-specific ion channel. Important for reducing fluoride concentration in the cell, thus reducing its toxicity. The protein is Fluoride-specific ion channel FluC 2 of Moorella thermoacetica (strain ATCC 39073 / JCM 9320).